Here is a 416-residue protein sequence, read N- to C-terminus: Gamma-glutamyl phosphate reductase (416 aa).

It belongs to the gamma-glutamyl phosphate reductase family.

It localises to the cytoplasm. The catalysed reaction is L-glutamate 5-semialdehyde + phosphate + NADP(+) = L-glutamyl 5-phosphate + NADPH + H(+). It participates in amino-acid biosynthesis; L-proline biosynthesis; L-glutamate 5-semialdehyde from L-glutamate: step 2/2. Its function is as follows. Catalyzes the NADPH-dependent reduction of L-glutamate 5-phosphate into L-glutamate 5-semialdehyde and phosphate. The product spontaneously undergoes cyclization to form 1-pyrroline-5-carboxylate. In Streptococcus thermophilus, this protein is Gamma-glutamyl phosphate reductase.